Here is a 317-residue protein sequence, read N- to C-terminus: Ribosomal RNA small subunit methyltransferase H (317 aa).

Residues 30 to 32 (GGH), D50, Y78, D95, and Q102 each bind S-adenosyl-L-methionine.

It belongs to the methyltransferase superfamily. RsmH family.

It is found in the cytoplasm. The enzyme catalyses cytidine(1402) in 16S rRNA + S-adenosyl-L-methionine = N(4)-methylcytidine(1402) in 16S rRNA + S-adenosyl-L-homocysteine + H(+). Its function is as follows. Specifically methylates the N4 position of cytidine in position 1402 (C1402) of 16S rRNA. The polypeptide is Ribosomal RNA small subunit methyltransferase H (Nitrosomonas eutropha (strain DSM 101675 / C91 / Nm57)).